Here is a 195-residue protein sequence, read N- to C-terminus: Large ribosomal subunit protein uL5 (195 aa).

The protein belongs to the universal ribosomal protein uL5 family. As to quaternary structure, part of the 50S ribosomal subunit; part of the 5S rRNA/L5/L18/L25 subcomplex. Contacts the 5S rRNA and the P site tRNA. Forms a bridge to the 30S subunit in the 70S ribosome.

In terms of biological role, this is one of the proteins that bind and probably mediate the attachment of the 5S RNA into the large ribosomal subunit, where it forms part of the central protuberance. In the 70S ribosome it contacts protein S13 of the 30S subunit (bridge B1b), connecting the 2 subunits; this bridge is implicated in subunit movement. Contacts the P site tRNA; the 5S rRNA and some of its associated proteins might help stabilize positioning of ribosome-bound tRNAs. This Chlorobium phaeobacteroides (strain DSM 266 / SMG 266 / 2430) protein is Large ribosomal subunit protein uL5.